Here is a 719-residue protein sequence, read N- to C-terminus: Protein psiI (719 aa).

The N-terminal stretch at Met1–Ser19 is a signal peptide. Residues Gln20–Thr658 are Extracellular-facing. Residues Asn62, Asn105, Asn118, Asn151, Asn315, Asn379, Asn454, Asn488, Asn500, Asn538, Asn592, and Asn629 are each glycosylated (N-linked (GlcNAc...) asparagine). The PA14 domain maps to Leu119–Asp261. A helical membrane pass occupies residues Ala659–Gly679. The Cytoplasmic segment spans residues Lys680 to Gln719.

Belongs to the prespore-cell-inducing factor family.

Its subcellular location is the membrane. The polypeptide is Protein psiI (psiI) (Dictyostelium discoideum (Social amoeba)).